Reading from the N-terminus, the 228-residue chain is tRNA (carboxymethyluridine(34)-5-O)-methyltransferase (228 aa).

The protein resides in the cytoplasm. Its subcellular location is the nucleus. The catalysed reaction is 5-(carboxymethyl)uridine(34) in tRNA + S-adenosyl-L-methionine = 5-(2-methoxy-2-oxoethyl)uridine(34) in tRNA + S-adenosyl-L-homocysteine. Functionally, required for the methylation of the wobble bases at position 34 in tRNA. Appears to have a role in stress-response. This chain is tRNA (carboxymethyluridine(34)-5-O)-methyltransferase (trm9), found in Schizosaccharomyces pombe (strain 972 / ATCC 24843) (Fission yeast).